The primary structure comprises 192 residues: Zinc finger CCHC domain-containing protein 10 (192 aa).

The CCHC-type zinc finger occupies 43 to 60 (VRCQKCLEFGHWTYECTG). The segment at 89 to 192 (QSIGETNVER…DEPPKKKKKK (104 aa)) is disordered. Composition is skewed to low complexity over residues 109–136 (TSSS…SSSS) and 144–179 (SSSS…STDS).

The chain is Zinc finger CCHC domain-containing protein 10 (ZCCHC10) from Homo sapiens (Human).